The sequence spans 134 residues: Large ribosomal subunit protein uL14 (134 aa).

It belongs to the universal ribosomal protein uL14 family. Part of the 50S ribosomal subunit. Forms a cluster with proteins L3 and L19. In the 70S ribosome, L14 and L19 interact and together make contacts with the 16S rRNA in bridges B5 and B8.

Its function is as follows. Binds to 23S rRNA. Forms part of two intersubunit bridges in the 70S ribosome. The protein is Large ribosomal subunit protein uL14 of Deinococcus geothermalis (strain DSM 11300 / CIP 105573 / AG-3a).